The chain runs to 344 residues: Lysophosphatidic acid receptor 6 (344 aa).

Residues 1 to 19 lie on the Extracellular side of the membrane; the sequence is MVSVNSSHCFYNDSFKYTL. N-linked (GlcNAc...) asparagine glycosylation is present at asparagine 5. The helical transmembrane segment at 20-46 threads the bilayer; the sequence is YGCMFSMVFVLGLISNCVAIYIFICVL. At 47-55 the chain is on the cytoplasmic side; sequence KVRNETTTY. Residues 56–79 traverse the membrane as a helical segment; sequence MINLAMSDLLFVFTLPFRIFYFTT. The Extracellular segment spans residues 80–92; sequence RNWPFGDLLCKIS. Cysteine 89 and cysteine 168 form a disulfide bridge. A helical membrane pass occupies residues 93–112; it reads VMLFYTNMYGSILFLTCISV. Residues 113–133 lie on the Cytoplasmic side of the membrane; it reads DRFLAIVYPFKSKTLRTKRNA. Residues 134-154 traverse the membrane as a helical segment; the sequence is KIVCTGVWLTVIGGSAPAVFV. At 155-181 the chain is on the extracellular side; that stretch reads QSTHSQGNNASEACFENFPEATWKTYL. A helical transmembrane segment spans residues 182–209; it reads SRIVIFIEIVGFFIPLILNVTCSSMVLK. Residues 210–227 are Cytoplasmic-facing; that stretch reads TLTKPVTLSRSKINKTKV. A helical transmembrane segment spans residues 228-253; it reads LKMIFVHLIIFCFCFVPYNINLILYS. Residues 254–272 lie on the Extracellular side of the membrane; sequence LVRTQTFVNCSVVAAVRTM. Residues 273–292 traverse the membrane as a helical segment; that stretch reads YPITLCIAVSNCCFDPIVYY. A lipid anchor (S-palmitoyl cysteine) is attached at cysteine 284. The Cytoplasmic segment spans residues 293–344; the sequence is FTSDTIQNSIKMKNWSVRRSDFRFSEVHGAENFIQHNLQTLKSKIFDNESAA.

This sequence belongs to the G-protein coupled receptor 1 family. In terms of tissue distribution, expressed ubiquitously, including in skin and hair follicle cells. Detected in both Henle's and Huxley's layers of the inner root sheath of the hair follicle and in suprabasal layers of the epidermis (at protein level). Expressed at low levels in peripheral blood leukocytes.

It localises to the cell membrane. Functionally, binds to oleoyl-L-alpha-lysophosphatidic acid (LPA). Intracellular cAMP is involved in the receptor activation. Important for the maintenance of hair growth and texture. This chain is Lysophosphatidic acid receptor 6 (LPAR6), found in Homo sapiens (Human).